Here is a 120-residue protein sequence, read N- to C-terminus: MHAFSKIRLTFNQDGPQSHEDDSAGIAVQDAKPTLQAPPMYKVVLFNDDYTPMDFVVEVLEVFFNLNRELATKVMLAVHTEGRAVCGLFTRDIAETKAAQVNQYARESQHPLLCEIEKDG.

The protein belongs to the ClpS family. In terms of assembly, binds to the N-terminal domain of the chaperone ClpA.

Functionally, involved in the modulation of the specificity of the ClpAP-mediated ATP-dependent protein degradation. The polypeptide is ATP-dependent Clp protease adapter protein ClpS (Pseudomonas syringae pv. tomato (strain ATCC BAA-871 / DC3000)).